The following is a 166-amino-acid chain: SsrA-binding protein (166 aa).

It belongs to the SmpB family.

The protein resides in the cytoplasm. In terms of biological role, required for rescue of stalled ribosomes mediated by trans-translation. Binds to transfer-messenger RNA (tmRNA), required for stable association of tmRNA with ribosomes. tmRNA and SmpB together mimic tRNA shape, replacing the anticodon stem-loop with SmpB. tmRNA is encoded by the ssrA gene; the 2 termini fold to resemble tRNA(Ala) and it encodes a 'tag peptide', a short internal open reading frame. During trans-translation Ala-aminoacylated tmRNA acts like a tRNA, entering the A-site of stalled ribosomes, displacing the stalled mRNA. The ribosome then switches to translate the ORF on the tmRNA; the nascent peptide is terminated with the 'tag peptide' encoded by the tmRNA and targeted for degradation. The ribosome is freed to recommence translation, which seems to be the essential function of trans-translation. The sequence is that of SsrA-binding protein from Parasynechococcus marenigrum (strain WH8102).